Here is a 1017-residue protein sequence, read N- to C-terminus: Probable beta-galactosidase B (1017 aa).

An N-terminal signal peptide occupies residues 1-20 (MTRITKLCVLLLSSIGLLAA). N-linked (GlcNAc...) asparagine glycosylation occurs at asparagine 23. Tyrosine 90 provides a ligand contact to substrate. Residue asparagine 100 is glycosylated (N-linked (GlcNAc...) asparagine). Substrate-binding residues include asparagine 135, alanine 136, and glutamate 137. A glycan (N-linked (GlcNAc...) asparagine) is linked at asparagine 158. Residue asparagine 195 coordinates substrate. Glutamate 196 serves as the catalytic Proton donor. An N-linked (GlcNAc...) asparagine glycan is attached at asparagine 211. Tyrosine 265 lines the substrate pocket. Cysteine 271 and cysteine 324 form a disulfide bridge. Residue glutamate 308 is the Nucleophile of the active site. Tyrosine 373 serves as a coordination point for substrate. N-linked (GlcNAc...) asparagine glycosylation is found at asparagine 411, asparagine 417, asparagine 456, asparagine 628, asparagine 681, asparagine 737, asparagine 770, asparagine 777, asparagine 785, asparagine 828, and asparagine 829.

Belongs to the glycosyl hydrolase 35 family.

The protein localises to the secreted. The enzyme catalyses Hydrolysis of terminal non-reducing beta-D-galactose residues in beta-D-galactosides.. Its function is as follows. Cleaves beta-linked terminal galactosyl residues from gangliosides, glycoproteins, and glycosaminoglycans. This is Probable beta-galactosidase B (lacB) from Aspergillus niger (strain ATCC MYA-4892 / CBS 513.88 / FGSC A1513).